A 159-amino-acid chain; its full sequence is Ribosomal RNA large subunit methyltransferase H (159 aa).

Residues L76, G108, and F127 to L132 contribute to the S-adenosyl-L-methionine site.

It belongs to the RNA methyltransferase RlmH family. In terms of assembly, homodimer.

The protein localises to the cytoplasm. It catalyses the reaction pseudouridine(1915) in 23S rRNA + S-adenosyl-L-methionine = N(3)-methylpseudouridine(1915) in 23S rRNA + S-adenosyl-L-homocysteine + H(+). Its function is as follows. Specifically methylates the pseudouridine at position 1915 (m3Psi1915) in 23S rRNA. This chain is Ribosomal RNA large subunit methyltransferase H, found in Streptococcus pneumoniae (strain 70585).